A 376-amino-acid polypeptide reads, in one-letter code: Alpha-2,8-sialyltransferase 8E (376 aa).

Over 1 to 17 (MRYADPSANRDLLGSRT) the chain is Cytoplasmic. The helical; Signal-anchor for type II membrane protein transmembrane segment at 18–38 (LLFIFICAFALVTLLQQILYG) threads the bilayer. Topologically, residues 39–376 (RNYIKRYFEF…RVHTGTCSCC (338 aa)) are lumenal. Asparagine 56 and asparagine 96 each carry an N-linked (GlcNAc...) asparagine glycan. 2 disulfide bridges follow: cysteine 164/cysteine 313 and cysteine 178/cysteine 373. Residues asparagine 192 and 214 to 216 (NPS) each bind substrate. 2 N-linked (GlcNAc...) asparagine glycosylation sites follow: asparagine 241 and asparagine 284. 300 to 302 (STG) is a binding site for substrate. Residue histidine 348 is the Proton donor/acceptor of the active site.

The protein belongs to the glycosyltransferase 29 family. As to expression, expressed in fetal and adult brain, adult heart and skeletal muscle. In terms of tissue distribution, expressed in fetal and adult brain, not detected in adult heart and skeletal muscle.

It is found in the golgi apparatus membrane. The catalysed reaction is a ganglioside GT1b (d18:1(4E)) + CMP-N-acetyl-beta-neuraminate = a ganglioside GQ1b (d18:1(4E)) + CMP + H(+). It catalyses the reaction a ganglioside GD3 (d18:1(4E)) + CMP-N-acetyl-beta-neuraminate = a ganglioside GT3 (d18:1(4E)) + CMP + H(+). It carries out the reaction a ganglioside GD1a (d18:1(4E)) + CMP-N-acetyl-beta-neuraminate = a ganglioside GT1a (d18:1(4E)) + CMP + H(+). The enzyme catalyses a ganglioside GM1b (d18:1(4E)) + CMP-N-acetyl-beta-neuraminate = a ganglioside GD1c (d18:1(4E)) + CMP + H(+). The catalysed reaction is a ganglioside GQ1c (d18:1(4E)) + CMP-N-acetyl-beta-neuraminate = a ganglioside GP1c (d18:1(4E)) + CMP + H(+). The protein operates within protein modification; protein glycosylation. Its function is as follows. Involved in the synthesis of gangliosides GD1c, GT1a, GQ1b, GP1c and GT3 from GD1a, GT1b, GM1b and GD3 respectively. This Homo sapiens (Human) protein is Alpha-2,8-sialyltransferase 8E.